Consider the following 306-residue polypeptide: MQKYDIKTFQGMILALQDYWAQNGCTIVQPLDMEVGAGTSHPMTCLRALGPEPMSTAYVQPSRRPTDGRYGENPNRLQHYYQFQVALKPSPDNIQELYLGSLEVLGIDPLVHDIRFVEDNWENPTLGAWGLGWEIWLNGMEVTQFTYFQQVGGLECKPVTGEITYGIERLAMYIQEVDSVYDLVWNIGPDGTAVTYGDIFHQNEVEQSTYNFEHADVDFLFGFFDQCEKESKELLELEKPLPLPAYERILKAAHAFNLLDARKAISVTERQRYILRIRNLTKAVAEAYYASREALGFPMCKKNEEK.

It belongs to the class-II aminoacyl-tRNA synthetase family. As to quaternary structure, tetramer of two alpha and two beta subunits.

Its subcellular location is the cytoplasm. The catalysed reaction is tRNA(Gly) + glycine + ATP = glycyl-tRNA(Gly) + AMP + diphosphate. This Aliivibrio fischeri (strain ATCC 700601 / ES114) (Vibrio fischeri) protein is Glycine--tRNA ligase alpha subunit.